Reading from the N-terminus, the 277-residue chain is Large ribosomal subunit protein uL2 (277 aa).

Disordered regions lie at residues 37-60 (KNST…GHKH) and 223-264 (VVMN…NKRT). Residues 39-49 (STAGRNNNGHI) are compositionally biased toward polar residues. The segment covering 50–60 (TTRHKGGGHKH) has biased composition (basic residues). The segment covering 229–244 (DHPHGGGEGRTGEARE) has biased composition (basic and acidic residues).

It belongs to the universal ribosomal protein uL2 family. In terms of assembly, part of the 50S ribosomal subunit. Forms a bridge to the 30S subunit in the 70S ribosome.

In terms of biological role, one of the primary rRNA binding proteins. Required for association of the 30S and 50S subunits to form the 70S ribosome, for tRNA binding and peptide bond formation. It has been suggested to have peptidyltransferase activity; this is somewhat controversial. Makes several contacts with the 16S rRNA in the 70S ribosome. The protein is Large ribosomal subunit protein uL2 of Neisseria gonorrhoeae (strain ATCC 700825 / FA 1090).